Here is a 308-residue protein sequence, read N- to C-terminus: Glutathione synthetase (308 aa).

The ATP-grasp domain occupies 120–304 (KLGALRFNNL…LADQVIARLL (185 aa)). 146-202 (AREQEEVVLKPLGGRAGQGLVRVAGAAPGLEALLELVTDQEQLPVMVQRFLPAVIEG) is an ATP binding site. 2 residues coordinate Mg(2+): Glu-275 and Asn-277.

Belongs to the prokaryotic GSH synthase family. Mg(2+) is required as a cofactor. Requires Mn(2+) as cofactor.

The enzyme catalyses gamma-L-glutamyl-L-cysteine + glycine + ATP = glutathione + ADP + phosphate + H(+). Its pathway is sulfur metabolism; glutathione biosynthesis; glutathione from L-cysteine and L-glutamate: step 2/2. The sequence is that of Glutathione synthetase from Prochlorococcus marinus (strain MIT 9313).